The sequence spans 254 residues: Glc operon transcriptional activator (254 aa).

Positions 6-74 (RPICEVVAES…QGRDSRVARL (69 aa)) constitute an HTH gntR-type domain. A DNA-binding region (H-T-H motif) is located at residues 34 to 53 (ERRLCEKLGFSRSALREGLT).

Its function is as follows. Transcriptional activator of the glcDEFGB operon which is associated with glycolate utilization, and encodes malate synthase G and the genes needed for glycolate oxidase activity. Also negatively regulates the transcription of its own gene. Glycolate acts as an effector, but GlcC can also use acetate as an alternative effector. The sequence is that of Glc operon transcriptional activator (glcC) from Escherichia coli O6:H1 (strain CFT073 / ATCC 700928 / UPEC).